Reading from the N-terminus, the 580-residue chain is Protein O-linked-mannose beta-1,4-N-acetylglucosaminyltransferase 2 (580 aa).

Residues 1–4 (MHLS) lie on the Cytoplasmic side of the membrane. The chain crosses the membrane as a helical; Signal-anchor for type II membrane protein span at residues 5–25 (AVFNALLVSVLAAVLWKHVRL). Residues 26 to 580 (REHAATLEEE…PFADVLVCST (555 aa)) lie on the Lumenal side of the membrane. Asn-99 and Asn-276 each carry an N-linked (GlcNAc...) asparagine glycan. The region spanning 488–580 (ARCQASVQGA…PFADVLVCST (93 aa)) is the Fibronectin type-III domain.

This sequence belongs to the glycosyltransferase 61 family. As to expression, mainly expressed in the central nervous system.

Its subcellular location is the endoplasmic reticulum membrane. The catalysed reaction is 3-O-(alpha-D-mannosyl)-L-threonyl-[protein] + UDP-N-acetyl-alpha-D-glucosamine = 3-O-(N-acetyl-beta-D-glucosaminyl-(1-&gt;4)-alpha-D-mannosyl)-L-threonyl-[protein] + UDP + H(+). Its pathway is protein modification; protein glycosylation. O-linked mannose beta-1,4-N-acetylglucosaminyltransferase that transfers UDP-N-acetyl-D-glucosamine to the 4-position of the mannose to generate N-acetyl-D-glucosamine-beta-1,4-O-D-mannosylprotein. Involved in the biosynthesis of the phosphorylated O-mannosyl trisaccharide (N-acetylgalactosamine-beta-3-N-acetylglucosamine-beta-4-(phosphate-6-)mannose), a carbohydrate structure present in alpha-dystroglycan (DAG1), which is required for binding laminin G-like domain-containing extracellular proteins with high affinity. The protein is Protein O-linked-mannose beta-1,4-N-acetylglucosaminyltransferase 2 (Pomgnt2) of Mus musculus (Mouse).